We begin with the raw amino-acid sequence, 367 residues long: Ganglioside-induced differentiation-associated protein 1-like 1 (367 aa).

Residues 45–126 (ESLVLYHWTQ…YVERTFTGEH (82 aa)) form the GST N-terminal domain. Positions 174–341 (PKYATAEIRR…RLVKRKPPSF (168 aa)) constitute a GST C-terminal domain.

This sequence belongs to the GST superfamily.

The chain is Ganglioside-induced differentiation-associated protein 1-like 1 (GDAP1L1) from Homo sapiens (Human).